The chain runs to 210 residues: Superoxide dismutase [Mn], mitochondrial (210 aa).

Mn(2+)-binding residues include His29, His77, Asp163, and His167.

This sequence belongs to the iron/manganese superoxide dismutase family. Homotetramer. Mn(2+) is required as a cofactor.

The protein resides in the mitochondrion matrix. The catalysed reaction is 2 superoxide + 2 H(+) = H2O2 + O2. Destroys superoxide anion radicals which are normally produced within the cells and which are toxic to biological systems. The sequence is that of Superoxide dismutase [Mn], mitochondrial (sodB) from Aspergillus fumigatus (strain ATCC MYA-4609 / CBS 101355 / FGSC A1100 / Af293) (Neosartorya fumigata).